The chain runs to 528 residues: Carboxysome shell carbonic anhydrase (528 aa).

Positions 17 to 47 are disordered; it reads PIAPNPRWQKENPTAHGSTDTGGFGYNGGNE. Cys184 contacts Zn(2+). Catalysis depends on Asp186, which acts as the Proton acceptor. Residues His252 and Cys263 each coordinate Zn(2+).

It belongs to the beta-class carbonic anhydrase family. CsoSCA subfamily. In terms of assembly, homodimer. Zn(2+) is required as a cofactor.

The protein resides in the carboxysome. The enzyme catalyses hydrogencarbonate + H(+) = CO2 + H2O. With respect to regulation, inhibited by ethoxyzolamide and dithiothreitol (in crude extracts upon expression in E.coli). Functionally, reversible hydration of carbon dioxide. This bacteria encodes at least 3 CA enzymes. Essential for chemolithotrophic carbon dioxide fixation, supplies CO(2) to RuBisCO (ribulose bisphosphate carboxylase, cbbL-cbbS) in the carboxysome. This Hydrogenovibrio crunogenus (strain DSM 25203 / XCL-2) (Thiomicrospira crunogena) protein is Carboxysome shell carbonic anhydrase.